A 431-amino-acid chain; its full sequence is Probable zinc metalloprotease Lema_P086240 (431 aa).

A glycan (N-linked (GlcNAc...) asparagine) is linked at asparagine 46. Histidine 117, aspartate 137, and glutamate 170 together coordinate Zn(2+). The N-linked (GlcNAc...) asparagine glycan is linked to asparagine 185. Aspartate 197 serves as a coordination point for Zn(2+). Residues asparagine 258, asparagine 310, asparagine 349, asparagine 359, and asparagine 369 are each glycosylated (N-linked (GlcNAc...) asparagine). Residues 344–431 enclose the Fibronectin type-III domain; it reads PGMPRNVTID…KSPAVYPFPG (88 aa).

The protein belongs to the peptidase M28 family. M28B subfamily. Zn(2+) is required as a cofactor.

It is found in the secreted. This is Probable zinc metalloprotease Lema_P086240 from Leptosphaeria maculans (strain JN3 / isolate v23.1.3 / race Av1-4-5-6-7-8) (Blackleg fungus).